Consider the following 396-residue polypeptide: Chalcone synthase B (396 aa).

Cys-170 is a catalytic residue.

This sequence belongs to the thiolase-like superfamily. Chalcone/stilbene synthases family.

The enzyme catalyses (E)-4-coumaroyl-CoA + 3 malonyl-CoA + 3 H(+) = 2',4,4',6'-tetrahydroxychalcone + 3 CO2 + 4 CoA. Its pathway is secondary metabolite biosynthesis; flavonoid biosynthesis. Functionally, the primary product of this enzyme is 4,2',4',6'-tetrahydroxychalcone (also termed naringenin-chalcone or chalcone) which can under specific conditions spontaneously isomerize into naringenin. The chain is Chalcone synthase B (CHSB) from Ipomoea purpurea (Common morning glory).